The chain runs to 292 residues: Carbapenem-hydrolyzing beta-lactamase transcriptional activator (292 aa).

Residues 5-62 form the HTH lysR-type domain; that stretch reads IPLNALRAFEASARYLNFTKAGLELHVSQAAVSQHVRTLEAILGVNLFKRLPRGLQLT. The segment at residues 22–41 is a DNA-binding region (H-T-H motif); it reads FTKAGLELHVSQAAVSQHVR.

The protein belongs to the LysR transcriptional regulatory family.

This protein is a positive regulator of gene expression of carbapenem-hydrolyzing beta-lactamase (smeA). Seems to also be a repressor of its own transcription. This chain is Carbapenem-hydrolyzing beta-lactamase transcriptional activator (smeR), found in Serratia marcescens.